Reading from the N-terminus, the 558-residue chain is Eukaryotic translation initiation factor 3 subunit D (558 aa).

Residues 296–310 (EFDLLTVNETSVEPP) are RNA gate. The segment at 534–558 (DNTFESEGEEEDSDEEEQVKDAFQR) is disordered. Residues 537–551 (FESEGEEEDSDEEEQ) show a composition bias toward acidic residues.

It belongs to the eIF-3 subunit D family. In terms of assembly, component of the eukaryotic translation initiation factor 3 (eIF-3) complex.

It localises to the cytoplasm. MRNA cap-binding component of the eukaryotic translation initiation factor 3 (eIF-3) complex, which is involved in protein synthesis of a specialized repertoire of mRNAs and, together with other initiation factors, stimulates binding of mRNA and methionyl-tRNAi to the 40S ribosome. The eIF-3 complex specifically targets and initiates translation of a subset of mRNAs involved in cell proliferation. In the eIF-3 complex, eif3d specifically recognizes and binds the 7-methylguanosine cap of a subset of mRNAs. The polypeptide is Eukaryotic translation initiation factor 3 subunit D (Nasonia vitripennis (Parasitic wasp)).